Here is a 304-residue protein sequence, read N- to C-terminus: MLPRLGGPALPLLLPSLLLLLLLGAGGCGPGVRAEVLFRCPPCTPERLAACGPPPDAPCAELVREPGCGCCSVCARQEGEACGVYIPRCAQTLRCYPNPGSELPLKALVTGAGTCEKRRVGATPQQVADSEDDHSEGGLVENHVDGTMNMLGGSSAGRKPPKSGMKELAVFREKVNEQHRQMGKGAKHLSLEEPKKLRPPPARTPCQQELDQVLERISTMRLPDDRGPLEHLYSLHIPNCDKHGLYNLKQCKMSLNGQRGECWCVNPNTGKPIQGAPTIRGDPECHLFYNEQQENDGAHAQRVQ.

An N-terminal signal peptide occupies residues 1 to 34; that stretch reads MLPRLGGPALPLLLPSLLLLLLLGAGGCGPGVRA. One can recognise an IGFBP N-terminal domain in the interval 36 to 118; the sequence is VLFRCPPCTP…VTGAGTCEKR (83 aa). 9 disulfide bridges follow: C40–C68, C43–C70, C51–C71, C59–C74, C82–C95, C89–C115, C206–C240, C251–C262, and C264–C285. The Thyroglobulin type-1 domain occupies 203–285; the sequence is RTPCQQELDQ…APTIRGDPEC (83 aa). The short motif at 280–282 is the Cell attachment site element; the sequence is RGD.

In terms of assembly, interacts with IGF1. Interacts with IGF2. Interacts (via RGD motif) with integrin alpha5/ITGA5; this interaction induces cell migration, adhesion or apoptosis according to the context. Interacts with PTPRB; this interaction leads to PTPRB dimerization and inactivation. Post-translationally, cleaved by MMP9 leading to release of free IGF2 from IGFBP2-IGF2 complex, which contributes to enhance the motility and the growth of astrocytes. O-glycosylated. As to expression, in adults, expressed in brain, testes, ovaries, and kidney. Expression in the adult liver is barely detectable.

It localises to the secreted. In terms of biological role, multifunctional protein that plays a critical role in regulating the availability of IGFs such as IGF1 and IGF2 to their receptors and thereby regulates IGF-mediated cellular processes including proliferation, differentiation, and apoptosis in a cell-type specific manner. Functions coordinately with receptor protein tyrosine phosphatase beta/PTPRB and the IGF1 receptor to regulate IGF1-mediated signaling by stimulating the phosphorylation of PTEN leading to its inactivation and AKT1 activation. Plays a positive role in cell migration via interaction with integrin alpha5/ITGA5 through an RGD motif. Additionally, interaction with ITGA5/ITGB1 enhances the adhesion of endothelial progenitor cells to endothelial cells. Upon mitochondrial damage, facilitates apoptosis with ITGA5 of podocytes, and then activates the phosphorylation of focal adhesion kinase (FAK)-mediated mitochondrial injury. The protein is Insulin-like growth factor-binding protein 2 (Igfbp2) of Rattus norvegicus (Rat).